Consider the following 115-residue polypeptide: MKVIATLYGLLFLTVVLGDITEGNENDLVENFREELSEADIPLLKKLEAIEDALLEKDFLPYEEEDRNARPKRCAKVRNWCAKNEDCCCPMKCIGAWYNQQSSCQSTFMGMFKKC.

An N-terminal signal peptide occupies residues 1-18 (MKVIATLYGLLFLTVVLG). The propeptide occupies 19-73 (DITEGNENDLVENFREELSEADIPLLKKLEAIEDALLEKDFLPYEEEDRNARPKR). Cystine bridges form between Cys-74–Cys-88, Cys-81–Cys-93, Cys-87–Cys-104, and Cys-89–Cys-115.

This sequence belongs to the neurotoxin 06 (delta-actx) family. In terms of tissue distribution, expressed by the venom gland.

It localises to the secreted. In terms of biological role, neurotoxin that slows inactivation of voltage-gated sodium channels (Nav). In vivo, is lethal to both vertebrates and insects. The chain is Delta-hexatoxin-Hi1a from Hadronyche infensa (Fraser island funnel-web spider).